The primary structure comprises 156 residues: ATP synthase subunit b (156 aa).

A helical transmembrane segment spans residues 7-29; it reads LIGQMGTFLVFWWFVNKVIWPMF.

Belongs to the ATPase B chain family. In terms of assembly, F-type ATPases have 2 components, F(1) - the catalytic core - and F(0) - the membrane proton channel. F(1) has five subunits: alpha(3), beta(3), gamma(1), delta(1), epsilon(1). F(0) has three main subunits: a(1), b(2) and c(10-14). The alpha and beta chains form an alternating ring which encloses part of the gamma chain. F(1) is attached to F(0) by a central stalk formed by the gamma and epsilon chains, while a peripheral stalk is formed by the delta and b chains.

Its subcellular location is the cell inner membrane. Its function is as follows. F(1)F(0) ATP synthase produces ATP from ADP in the presence of a proton or sodium gradient. F-type ATPases consist of two structural domains, F(1) containing the extramembraneous catalytic core and F(0) containing the membrane proton channel, linked together by a central stalk and a peripheral stalk. During catalysis, ATP synthesis in the catalytic domain of F(1) is coupled via a rotary mechanism of the central stalk subunits to proton translocation. In terms of biological role, component of the F(0) channel, it forms part of the peripheral stalk, linking F(1) to F(0). The sequence is that of ATP synthase subunit b from Dichelobacter nodosus (strain VCS1703A).